The primary structure comprises 100 residues: Small ribosomal subunit protein uS14 (100 aa).

Belongs to the universal ribosomal protein uS14 family. Part of the 30S ribosomal subunit. Contacts proteins S3 and S10.

Functionally, binds 16S rRNA, required for the assembly of 30S particles and may also be responsible for determining the conformation of the 16S rRNA at the A site. In Synechocystis sp. (strain ATCC 27184 / PCC 6803 / Kazusa), this protein is Small ribosomal subunit protein uS14.